The following is a 258-amino-acid chain: Casein kinase II subunit beta' (258 aa).

Polar residues predominate over residues 1 to 10 (MGSRSENVGT). The disordered stretch occupies residues 1-29 (MGSRSENVGTVTREGSRVEQDDVLMDDDS).

It belongs to the casein kinase 2 subunit beta family. Tetramer composed of an alpha subunit, an alpha' subunit, one beta subunit and one beta' subunit. Interacts with FACT subunits POB3 and SPT16. Interaction with YTA7. Post-translationally, phosphorylated by alpha subunit. The N-terminus is blocked.

Its function is as follows. Regulatory subunit of casein kinase II/CK2. As part of the kinase complex regulates the basal catalytic activity of the alpha subunit a constitutively active serine/threonine-protein kinase that phosphorylates a large number of substrates containing acidic residues C-terminal to the phosphorylated serine or threonine. This Saccharomyces cerevisiae (strain ATCC 204508 / S288c) (Baker's yeast) protein is Casein kinase II subunit beta'.